The sequence spans 342 residues: Dihydroorotate dehydrogenase (quinone) (342 aa).

Residues 60–64 and Thr84 contribute to the FMN site; that span reads AGLDK. Lys64 contributes to the substrate binding site. Residue 109 to 113 participates in substrate binding; it reads NRMGF. Residues Asn137 and Asn170 each coordinate FMN. Residue Asn170 coordinates substrate. Ser173 (nucleophile) is an active-site residue. Residue Asn175 participates in substrate binding. FMN-binding residues include Lys215 and Thr243. Substrate is bound at residue 244 to 245; the sequence is NT. FMN-binding positions include Gly266, Gly295, and 316 to 317; that span reads YS.

It belongs to the dihydroorotate dehydrogenase family. Type 2 subfamily. Monomer. It depends on FMN as a cofactor.

The protein resides in the cell membrane. It carries out the reaction (S)-dihydroorotate + a quinone = orotate + a quinol. It functions in the pathway pyrimidine metabolism; UMP biosynthesis via de novo pathway; orotate from (S)-dihydroorotate (quinone route): step 1/1. Its function is as follows. Catalyzes the conversion of dihydroorotate to orotate with quinone as electron acceptor. The polypeptide is Dihydroorotate dehydrogenase (quinone) (Nitrosomonas eutropha (strain DSM 101675 / C91 / Nm57)).